A 286-amino-acid polypeptide reads, in one-letter code: Probable protein VP2 (286 aa).

Disordered stretches follow at residues 67–108 and 184–286; these read LPAA…GPED and QAAR…GGGI. Residues 222 to 241 show a composition bias toward basic residues; sequence GKTRSRRKAGRKAQRKRRRP. The span at 242–265 shows a compositional bias: low complexity; the sequence is SPSSSSSSCSNSESWESNSDSCST.

Post-translationally, phosphorylated at C-terminal serines.

This Homo sapiens (Human) protein is Probable protein VP2.